The chain runs to 269 residues: Tryptophan synthase alpha chain (269 aa).

Catalysis depends on proton acceptor residues Glu-49 and Asp-60.

It belongs to the TrpA family. Tetramer of two alpha and two beta chains.

It catalyses the reaction (1S,2R)-1-C-(indol-3-yl)glycerol 3-phosphate + L-serine = D-glyceraldehyde 3-phosphate + L-tryptophan + H2O. It participates in amino-acid biosynthesis; L-tryptophan biosynthesis; L-tryptophan from chorismate: step 5/5. Functionally, the alpha subunit is responsible for the aldol cleavage of indoleglycerol phosphate to indole and glyceraldehyde 3-phosphate. In Acidovorax sp. (strain JS42), this protein is Tryptophan synthase alpha chain.